We begin with the raw amino-acid sequence, 860 residues long: DDB1- and CUL4-associated factor 6 (860 aa).

WD repeat units follow at residues 49 to 88 (VHDGCVNTICWNDTGEYILSGSDDTKLVISNPYSRKVLTT), 92 to 133 (GHRA…ETNR), 139 to 179 (CHYG…SCTK), 189 to 229 (NCRR…TRAT), and 251 to 290 (NKSCRVTSLCYSEDGQEILVSYSSDYIYLFDPKDDTAREL). Basic and acidic residues-rich tracts occupy residues 288–303 (RELKTPSAEERREELR) and 312–334 (LRGDWSDTGPRARPESERERDGE). 4 disordered regions span residues 288-340 (RELK…PNVS), 355-392 (EASEVAQSNRGRGRSRPRGGTSQSDISTLPTVPSSPDL), 407-490 (QFLQ…TTST), and 502-675 (IASS…GPGD). The residue at position 336 (Ser336) is a Phosphoserine. Polar residues-rich tracts occupy residues 379 to 388 (DISTLPTVPS) and 409 to 421 (LQPSTSSTMSAQA). Residues 422 to 441 (HSTSSPTESPHSTPLLSSPD) show a composition bias toward low complexity. The span at 457-467 (HQSDNNNEKLS) shows a compositional bias: basic and acidic residues. Residues 480-490 (HYSTEGTTTST) show a composition bias toward polar residues. A compositionally biased stretch (low complexity) spans 502–511 (IASSSRGIGS). Basic and acidic residues predominate over residues 535–549 (SETKAPEESSEDVTK). Positions 614–626 (TSTESATNENNTN) are enriched in low complexity. Over residues 627 to 636 (PEPQFQTEAT) the composition is skewed to polar residues. Phosphoserine is present on Ser649. Residue Thr654 is modified to Phosphothreonine. Ser657 carries the phosphoserine modification. An IQ domain is found at 676-705 (RRSAVARIQEFFRRRKERKEMEELDTLNIR). WD repeat units lie at residues 718-756 (NSRTMIKEANFWGANFVMSGSDCGHIFIWDRHTAEHLML) and 759-798 (ADNHVVNCLQPHPFDPILASSGIDYDIKIWSPLEESRIFN). 2 positions are modified to phosphoserine: Ser847 and Ser850.

Interacts with the nuclear receptors NR3C1 and AR in the presence of ligand. Interacts with DDB1, CUL4A and CUL4B. In terms of tissue distribution, highly expressed in skeletal muscle and testis. Expressed to a lesser degree in heart, prostate, and adrenal gland.

It localises to the nucleus. It participates in protein modification; protein ubiquitination. Functionally, ligand-dependent coactivator of nuclear receptors. Enhance transcriptional activity of the nuclear receptors NR3C1 and AR. May function as a substrate receptor for CUL4-DDB1 E3 ubiquitin-protein ligase complex. The polypeptide is DDB1- and CUL4-associated factor 6 (DCAF6) (Homo sapiens (Human)).